We begin with the raw amino-acid sequence, 396 residues long: Inositol polyphosphate 1-phosphatase (396 aa).

Asp-54 lines the Li(+) pocket. Glu-79 lines the Mg(2+) pocket. Li(+) is bound at residue Glu-80. Mg(2+)-binding residues include Asp-153 and Ile-155. Positions 156, 157, 158, 264, 266, 286, 287, 290, and 308 each coordinate 1D-myo-inositol 1,4-bisphosphate. Residue Asp-313 participates in Mg(2+) binding. A Phosphoserine modification is found at Ser-314.

Belongs to the inositol monophosphatase superfamily. In terms of assembly, monomer. The cofactor is Mg(2+).

The catalysed reaction is 1D-myo-inositol 1,4-bisphosphate + H2O = 1D-myo-inositol 4-phosphate + phosphate. It catalyses the reaction 1D-myo-inositol 1,3,4-trisphosphate + H2O = 1D-myo-inositol 3,4-bisphosphate + phosphate. Its pathway is signal transduction; phosphatidylinositol signaling pathway. Inhibited by Li(+). Functionally, mg(2+)-dependent phosphatase that catalyzes the hydrolysis of the 1-position phosphate from inositol 1,4-bisphosphate and inositol 1,3,4-trisphosphate and participates in inositol phosphate metabolism. The polypeptide is Inositol polyphosphate 1-phosphatase (Mus musculus (Mouse)).